Here is a 207-residue protein sequence, read N- to C-terminus: Large ribosomal subunit protein uL4 (207 aa).

The interval 54-76 is disordered; it reads RSAVRGGGRKPWRQKGTGRARQG. Residues 60–71 are compositionally biased toward basic residues; sequence GGRKPWRQKGTG.

The protein belongs to the universal ribosomal protein uL4 family. In terms of assembly, part of the 50S ribosomal subunit.

In terms of biological role, one of the primary rRNA binding proteins, this protein initially binds near the 5'-end of the 23S rRNA. It is important during the early stages of 50S assembly. It makes multiple contacts with different domains of the 23S rRNA in the assembled 50S subunit and ribosome. Its function is as follows. Forms part of the polypeptide exit tunnel. This chain is Large ribosomal subunit protein uL4, found in Staphylococcus haemolyticus (strain JCSC1435).